The primary structure comprises 721 residues: Putative cullin-like protein 1 (721 aa).

The 63-residue stretch at 651-713 folds into the Cullin neddylation domain; sequence DRRYAIDAAL…RDYLERDTEN (63 aa).

It belongs to the cullin family.

The sequence is that of Putative cullin-like protein 1 from Arabidopsis thaliana (Mouse-ear cress).